Reading from the N-terminus, the 475-residue chain is NADH-quinone oxidoreductase subunit N (475 aa).

14 helical membrane passes run leucine 5 to valine 25, phenylalanine 32 to methionine 52, phenylalanine 71 to alanine 91, phenylalanine 99 to glutamate 119, leucine 121 to phenylalanine 141, tyrosine 155 to glycine 175, serine 193 to phenylalanine 213, proline 232 to leucine 252, tryptophan 266 to isoleucine 286, leucine 294 to threonine 314, leucine 322 to methionine 342, alanine 366 to phenylalanine 386, methionine 389 to valine 409, and leucine 439 to leucine 459.

Belongs to the complex I subunit 2 family. NDH-1 is composed of 14 different subunits. Subunits NuoA, H, J, K, L, M, N constitute the membrane sector of the complex.

It is found in the cell inner membrane. The enzyme catalyses a quinone + NADH + 5 H(+)(in) = a quinol + NAD(+) + 4 H(+)(out). NDH-1 shuttles electrons from NADH, via FMN and iron-sulfur (Fe-S) centers, to quinones in the respiratory chain. The immediate electron acceptor for the enzyme in this species is believed to be ubiquinone. Couples the redox reaction to proton translocation (for every two electrons transferred, four hydrogen ions are translocated across the cytoplasmic membrane), and thus conserves the redox energy in a proton gradient. The polypeptide is NADH-quinone oxidoreductase subunit N (Gluconacetobacter diazotrophicus (strain ATCC 49037 / DSM 5601 / CCUG 37298 / CIP 103539 / LMG 7603 / PAl5)).